The following is a 489-amino-acid chain: MIKLFNTLSKRVEVFKPIDDVVKIYCCGVTVYDLCHLGHARSYIAWDVLRRFLIYSDFKVKYVQNFTDIDDKILKRAKEESSSMKEVSEKNIIEFHKDMDSLGIMRPDSMPRATNHICNICSFITILEDKGYAYSRDGDVYYSVFKNKNYGKLSNQNIQEQNINKQGRMANEENNKKQNPQDFALWKKAKNDEPFFDSPWGRGRPGWHIECSAMVKDELGDTIDIHLGGSDLIFPHHENEIAQSEAANGKKLANYWLHNGMVNVNGQKMSKSLKNFKTIRELIKSGISPMTLRYFVMTVNYRKPLDFTEEALRSAAEAWKNINLALSFMDLTKGAFRSIDKNESIEEEYKEKLSFELSQKKLKFSEALGNDLNTAGAIAIIYDLAKPLKNFLNQFQRIEGLKIDLNEKFFLLENFKTLEKLTEVLGLKKEVLVKERKITEEEISSLINERLKAKKGKNYAKADEIRNLLKEKGIELIDQSKEITTWIRV.

Position 27 (cysteine 27) interacts with Zn(2+). The 'HIGH' region motif lies at 29–39 (VTVYDLCHLGH). Cysteine 211, histidine 236, and glutamate 240 together coordinate Zn(2+). A 'KMSKS' region motif is present at residues 268-272 (KMSKS). ATP is bound at residue lysine 271.

Belongs to the class-I aminoacyl-tRNA synthetase family. Monomer. The cofactor is Zn(2+).

The protein localises to the cytoplasm. The catalysed reaction is tRNA(Cys) + L-cysteine + ATP = L-cysteinyl-tRNA(Cys) + AMP + diphosphate. The sequence is that of Cysteine--tRNA ligase from Prochlorococcus marinus (strain MIT 9312).